The chain runs to 205 residues: Cytochrome c oxidase subunit 3 (205 aa).

A run of 5 helical transmembrane segments spans residues 28-48 (GTIV…AMYF), 72-92 (ALVI…GVFA), 104-124 (WFSL…YEYF), 142-162 (FFIT…AFVV), and 184-204 (SYYW…IYFI).

The protein belongs to the cytochrome c oxidase subunit 3 family. As to quaternary structure, associates with subunits I, II and IV to form cytochrome c oxidase.

The protein resides in the cell membrane. It carries out the reaction 4 Fe(II)-[cytochrome c] + O2 + 8 H(+)(in) = 4 Fe(III)-[cytochrome c] + 2 H2O + 4 H(+)(out). The chain is Cytochrome c oxidase subunit 3 (ctaE) from Corynebacterium diphtheriae (strain ATCC 700971 / NCTC 13129 / Biotype gravis).